A 130-amino-acid polypeptide reads, in one-letter code: General stress protein 13 (130 aa).

Positions 8-77 (GSVYTGKVTG…EKGKISLSIR (70 aa)) constitute an S1 motif domain. The disordered stretch occupies residues 76–109 (IRATQAAPEKKESKPRKPKAAQVSEEASTPQGFN). Polar residues predominate over residues 100 to 109 (EEASTPQGFN).

Found in association with the 30S subunit of the ribosome.

Its subcellular location is the cytoplasm. This chain is General stress protein 13 (yugI), found in Bacillus subtilis (strain 168).